The chain runs to 286 residues: D-tagatose-1,6-bisphosphate aldolase subunit KbaY (286 aa).

Aspartate 82 functions as the Proton donor in the catalytic mechanism. Zn(2+)-binding residues include histidine 83 and histidine 180. A dihydroxyacetone phosphate-binding site is contributed by glycine 181. Position 208 (histidine 208) interacts with Zn(2+). Dihydroxyacetone phosphate-binding positions include 209-211 (GAS) and 230-233 (NVAT).

It belongs to the class II fructose-bisphosphate aldolase family. TagBP aldolase KbaY subfamily. As to quaternary structure, homotetramer. Forms a complex with KbaZ. It depends on Zn(2+) as a cofactor.

It catalyses the reaction D-tagatofuranose 1,6-bisphosphate = D-glyceraldehyde 3-phosphate + dihydroxyacetone phosphate. It functions in the pathway carbohydrate metabolism; D-tagatose 6-phosphate degradation; D-glyceraldehyde 3-phosphate and glycerone phosphate from D-tagatose 6-phosphate: step 2/2. Functionally, catalytic subunit of the tagatose-1,6-bisphosphate aldolase KbaYZ, which catalyzes the reversible aldol condensation of dihydroxyacetone phosphate (DHAP or glycerone-phosphate) with glyceraldehyde 3-phosphate (G3P) to produce tagatose 1,6-bisphosphate (TBP). Requires KbaZ subunit for full activity and stability. The polypeptide is D-tagatose-1,6-bisphosphate aldolase subunit KbaY (Escherichia coli O17:K52:H18 (strain UMN026 / ExPEC)).